Reading from the N-terminus, the 451-residue chain is Tubby-like F-box protein 12 (451 aa).

The F-box domain occupies 57 to 112; that stretch reads SRWVGLPPELLRDVMKRLEEGESNWPSRKDVVACAAVCRTWREICKDIVQSPEICG. Residues 387 to 406 are compositionally biased toward low complexity; sequence LEQQQQQQQQNHASSSSSAS. The interval 387 to 407 is disordered; that stretch reads LEQQQQQQQQNHASSSSSASD.

The protein belongs to the TUB family. As to expression, ubiquitous.

The chain is Tubby-like F-box protein 12 (TULP12) from Oryza sativa subsp. japonica (Rice).